A 480-amino-acid polypeptide reads, in one-letter code: Dimethyl-sulfide monooxygenase (480 aa).

5 residues coordinate FMN: aspartate 58, threonine 104, histidine 154, tyrosine 158, and serine 230. The segment at 423–480 (QDSYKPGSLRRKLIGTNDGRVESTHPAAQYRDAYVGKESVADRTQPSPFANAKAPVAE) is disordered.

The protein belongs to the NtaA/SnaA/DszA monooxygenase family. Heterodimer of 2 subunits, DmoA and DmoB. It depends on FMN as a cofactor.

It catalyses the reaction dimethyl sulfide + NADH + O2 + H(+) = methanethiol + formaldehyde + NAD(+) + H2O. With respect to regulation, inhibited by umbelliferone, 8-anilinonaphthalenesulfonate, a range of metal-chelating agents, and Hg(2+), Cd(2+) and Pb(2+) ions. Monooxygenase that mediates oxidation of dimethyl sulfide, the first step in dimethyl sulfide degradation pathway. Has much lower activity with diethyl sulfide and other short-chain alkyl methyl sulfides. This chain is Dimethyl-sulfide monooxygenase (dmoA), found in Hyphomicrobium sulfonivorans.